A 341-amino-acid chain; its full sequence is Cytoplasmic tRNA 2-thiolation protein 1 (341 aa).

This sequence belongs to the TtcA family. CTU1/NCS6/ATPBD3 subfamily.

It localises to the cytoplasm. It functions in the pathway tRNA modification; 5-methoxycarbonylmethyl-2-thiouridine-tRNA biosynthesis. Functionally, plays a central role in 2-thiolation of mcm(5)S(2)U at tRNA wobble positions of tRNA(Lys), tRNA(Glu) and tRNA(Gln). Directly binds tRNAs and probably acts by catalyzing adenylation of tRNAs, an intermediate required for 2-thiolation. It is unclear whether it acts as a sulfurtransferase that transfers sulfur from thiocarboxylated URM1 onto the uridine of tRNAs at wobble position. The protein is Cytoplasmic tRNA 2-thiolation protein 1 of Aedes aegypti (Yellowfever mosquito).